The chain runs to 120 residues: ATP-dependent Clp protease adapter protein ClpS (120 aa).

The segment at 9–32 is disordered; sequence LTFNQDHPAEHEDDSSGIAVQESK.

It belongs to the ClpS family. Binds to the N-terminal domain of the chaperone ClpA.

Its function is as follows. Involved in the modulation of the specificity of the ClpAP-mediated ATP-dependent protein degradation. This chain is ATP-dependent Clp protease adapter protein ClpS, found in Ectopseudomonas mendocina (strain ymp) (Pseudomonas mendocina).